We begin with the raw amino-acid sequence, 1419 residues long: Multidrug resistance protein 1 (1419 aa).

Positions 1-37 (MGKEQKEKKDGNLSIKEEVEKELNKKSTAELFRKIKN) are r domain; regulates transporter activity. Residues 1–60 (MGKEQKEKKDGNLSIKEEVEKELNKKSTAELFRKIKNEKISFFLPFKCLPAQHRKLLFIS) are Cytoplasmic-facing. Positions 58 to 345 (FISFVCAVLS…ILPNITEYMK (288 aa)) constitute an ABC transmembrane type-1 1 domain. A helical transmembrane segment spans residues 61–81 (FVCAVLSGGTLPFFISVFGVI). The Vacuolar portion of the chain corresponds to 82–90 (LKNMNLGDD). A helical transmembrane segment spans residues 91–111 (INPIILSLVSIGLVQFILSMI). Over 112–168 (SSYCMDVITSKILKTLKLEYLRSVFYQDGQFHDNNPGSKLRSDLDFYLEQVSSGIGT) the chain is Cytoplasmic. The helical transmembrane segment at 169 to 189 (KFITIFTYASSFLGLYIWSLI) threads the bilayer. Over 190–191 (KN) the chain is Vacuolar. Residues 192–212 (ARLTLCITCVFPLIYVCGVIC) traverse the membrane as a helical segment. Over 213-275 (NKKVKLNKKT…KYILKANFVE (63 aa)) the chain is Cytoplasmic. A helical transmembrane segment spans residues 276–296 (ALHIGLINGLILVSYAFGFWY). Over 297-316 (GTRIIINSATNQYPNNDFNG) the chain is Vacuolar. A helical transmembrane segment spans residues 317-337 (ASVISILLGVLISMFMLTIIL). Residues 338–788 (PNITEYMKAL…YKEIFSYKKD (451 aa)) lie on the Cytoplasmic side of the membrane. The ABC transporter 1 domain occupies 378 to 662 (IEFKNVRFHY…NNNNNNNNNK (285 aa)). Residues tyrosine 387, threonine 389, arginine 390, serine 415, cysteine 417, glycine 418, lysine 419, serine 420, threonine 421, glutamine 462, lysine 562, serine 564, glycine 566, and glutamine 567 each contribute to the ATP site. Glutamine 462 contacts Mg(2+). 2 disordered regions span residues 639 to 665 (ERSD…KINN) and 697 to 752 (SSNK…TAEN). 2 stretches are compositionally biased toward low complexity: residues 643–665 (NNNN…KINN) and 697–715 (SSNK…NKSS). Polar residues predominate over residues 723–749 (GNDADNMNSLSIHENENISNNRNCKNT). A helical transmembrane segment spans residues 789 to 809 (VTIIFFSILVAGGLYPVFALL). In terms of domain architecture, ABC transmembrane type-1 2 spans 791 to 1083 (IIFFSILVAG…GSYAGKLMSL (293 aa)). The Vacuolar segment spans residues 810–829 (YARYVSTLFDFANLEYNSNK). Residues 830 to 850 (YSIYILLIAIAMFISETLKNY) traverse the membrane as a helical segment. At 851 to 907 (YNNKIGEKVEKTMKRRLFENILYQEMSFFDQDKNTPGVLSAHINRDVHLLKTGLVNN) the chain is on the cytoplasmic side. A run of 2 helical transmembrane segments spans residues 908 to 928 (IVIF…SFYF) and 929 to 949 (CPIV…VFAV). Topologically, residues 950-1032 (RARLTKSKEI…RIIVNAALWG (83 aa)) are cytoplasmic. The helical transmembrane segment at 1033-1053 (FSQSAQLFINSFAYWFGSFLI) threads the bilayer. The Vacuolar segment spans residues 1054 to 1057 (KRGT). Residues 1058–1078 (ILVDDFMKSLFTFIFTGSYAG) traverse the membrane as a helical segment. At 1079-1419 (KLMSLKGDSE…IYKKYVKLAK (341 aa)) the chain is on the cytoplasmic side. The ABC transporter 2 domain maps to 1126 to 1416 (VDIKDVNFRY…QDGIYKKYVK (291 aa)). 13 residues coordinate ATP: tyrosine 1135, arginine 1138, threonine 1163, glycine 1164, glycine 1166, lysine 1167, serine 1168, threonine 1169, glutamine 1256, leucine 1312, serine 1313, glycine 1315, and glutamine 1316. Serine 1168 provides a ligand contact to Mg(2+). Glutamine 1256 is a Mg(2+) binding site.

Belongs to the ABC transporter superfamily. ABCB family. Multidrug resistance exporter (TC 3.A.1.201) subfamily.

Its subcellular location is the vacuole membrane. The enzyme catalyses ATP + H2O + xenobioticSide 1 = ADP + phosphate + xenobioticSide 2.. Its function is as follows. Energy-dependent efflux pump responsible for decreased drug accumulation in multidrug-resistant cells. Transports lumefantrine, mefloquine, chloroquine, quinine, quinidine, amodiaquine, piperaquine, dihydroartemisinin and quinacrine. This Plasmodium falciparum (isolate 3D7) protein is Multidrug resistance protein 1.